A 294-amino-acid polypeptide reads, in one-letter code: Holothin acyltransferase (294 aa).

One can recognise an N-acetyltransferase domain in the interval 17–146 (WTSKPASLEE…SRLVGIHNQQ (130 aa)).

It catalyses the reaction marinoloyl-CoA C + holothin = thiomarinol C + CoA. The enzyme catalyses pseudomonoyl-CoA C + holothin = pseudomonic acid C--holothin + CoA. The protein operates within antibiotic biosynthesis. Acyltransferase that catalyzes the formation of pseudomonic acid C-holothin (PAC-holothin), a thiomarinol analog, from pseudomonoyl-CoA C (PAC-CoA) and holothin. Accepts linear CoA substrates of different lengths, including propionyl-, hexanoyl-, octanoyl-, oleoyl- and dodecanoyl-CoA, readily converting all into the corresponding acyl-holothin adducts. In vivo, is probably involved in the biosynthesis of thiomarinol, a naturally occurring double-headed antibiotic. This chain is Holothin acyltransferase, found in Pseudoalteromonas sp. (strain SANK 73390).